Here is a 653-residue protein sequence, read N- to C-terminus: Forkhead box protein O1 (653 aa).

Disordered regions lie at residues Met-1–Ala-64 and Leu-117–Asn-156. The residue at position 24 (Thr-24) is a Phosphothreonine; by PKB/AKT1 or PKB/AKT2 and SGK1. Low complexity predominate over residues Ser-35 to Ala-64. Residues Pro-119–Ala-140 show a composition bias toward pro residues. The segment at residues Ala-157–Ser-233 is a DNA-binding region (fork-head). DNA-binding stretches follow at residues Asn-209–Ser-216 and Ser-232–Trp-235. Position 210 is a phosphoserine; by STK4/MST1 (Ser-210). A phosphoserine mark is found at Ser-216, Ser-232, and Ser-233. Positions Ser-232–Asp-335 are disordered. Lys-243 and Lys-246 each carry N6-acetyllysine. The residue at position 247 (Ser-247) is a Phosphoserine; by CDK1. An omega-N-methylarginine; by PRMT1 mark is found at Arg-249 and Arg-251. The Nuclear localization signal motif lies at Arg-249–Arg-251. Residue Ser-254 is modified to Phosphoserine; by PKB/AKT1 and SGK1. 3 positions are modified to N6-acetyllysine: Lys-260, Lys-263, and Lys-272. Positions Gly-281–Gln-561 are sufficient for interaction with NLK. Phosphoserine occurs at positions 285 and 296. Over residues Asn-307–Gly-324 the composition is skewed to polar residues. Position 317 is a phosphoserine; by PKB/AKT1 or PKB/AKT2 (Ser-317). Ser-320 is modified (phosphoserine; by CK1 and SGK1). At Ser-323 the chain carries Phosphoserine. Position 327 is a phosphoserine; by DYRK1A (Ser-327). A Phosphothreonine modification is found at Thr-331. Residues Ser-361 to Gln-457 are required for interaction with RUNX2. N6-acetyllysine is present on Lys-421. The Required for interaction with SIRT1 motif lies at Leu-460–Leu-464.

In terms of assembly, interacts with LRPPRC. Interacts with RUNX2; the interaction inhibits RUNX2 transcriptional activity and mediates the IGF1/insulin-dependent BGLAP expression in osteoblasts Interacts with PPP2R1A; the interaction regulates the dephosphorylation of FOXO1 at Thr-24 and Ser-254 leading to its nuclear import. Interacts with NLK. Interacts with SIRT1; the interaction results in the deacetylation of FOXO1 leading to activation of FOXO1-mediated transcription of genes involved in DNA repair and stress resistance. Binds to CDK1. Interacts with the 14-3-3 proteins, YWHAG and YWHAZ; the interactions require insulin-stimulated phosphorylation on Thr-24, promote nuclear exit and loss of transcriptional activity. Interacts with SKP2; the interaction ubiquitinates FOXO1 leading to its proteasomal degradation. The interaction requires the presence of KRIT1. Interacts (via the C-terminal half) with ATF4 (via its DNA-binding domain); the interaction occurs in osteoblasts, regulates glucose homeostasis via suppression of beta-cell proliferation and subsequent decrease in insulin production. Interacts with PRMT1; the interaction methylates FOXO1, prevents PKB/AKT1 phosphorylation and retains FOXO1 in the nucleus. Interacts with EP300 and CREBBP; the interactions acetylate FOXO1. Interacts with SIRT2; the interaction is disrupted in response to oxidative stress or serum deprivation, leading to increased level of acetylated FOXO1, which promotes stress-induced autophagy by stimulating E1-like activating enzyme ATG7. Interacts (acetylated form) with ATG7; the interaction is increased in response to oxidative stress or serum deprivation and promotes the autophagic process leading to cell death. Interacts (acetylated form) with PPARG. Interacts with XBP1; this interaction is direct and leads to FOXO1 ubiquitination and degradation via the proteasome pathway. Interacts with WDFY2. Forms a complex with WDFY2 and AKT1. Interacts with CRY1. Interacts with PPIA/CYPA; the interaction promotes FOXO1 dephosphorylation, nuclear accumulation and transcriptional activity. Interacts with TOX4; FOXO1 is required for full induction of TOX4-dependent activity and the interaction is inhibited by insulin. Interacts (when phosphorylated on Ser-254) with STUB1/CHIP. Post-translationally, phosphorylation by NLK promotes nuclear export and inhibits the transcriptional activity. In response to growth factors, phosphorylation on Thr-24, Ser-254 and Ser-320 by PKB/AKT1 promotes nuclear export and inactivation of transactivational activity. Phosphorylation on Thr-24 is required for binding 14-3-3 proteins. Phosphorylation of Ser-254 decreases DNA-binding activity and promotes the phosphorylation of Thr-24 and Ser-317, permitting phosphorylation of Ser-320 and Ser-323, probably by CDK1, leading to nuclear exclusion and loss of function. Stress signals, such as response to oxygen or nitric oxide, attenuate the PKB/AKT1-mediated phosphorylation leading to nuclear retention. Phosphorylation of Ser-327 is independent of IGF1 and leads to reduced function. Dephosphorylated on Thr-24 and Ser-254 by PP2A in beta-cells under oxidative stress leading to nuclear retention. Phosphorylation of Ser-247 by CDK1 disrupts binding of 14-3-3 proteins leading to nuclear accumulation and has no effect on DNA binding nor transcriptional activity. Phosphorylation by STK4/MST1 on Ser-210, upon oxidative stress, inhibits binding to 14-3-3 proteins and nuclear export. PPIA/CYPA promotes its dephosphorylation on Ser-254. In terms of processing, ubiquitinated by SKP2. Ubiquitination leads to proteasomal degradation. Ubiquitinated by STUB1/CHIP; when Ser-254 is phosphorylated. Methylation inhibits AKT1-mediated phosphorylation at Ser-254 and is increased by oxidative stress. Post-translationally, acetylated. Acetylation at Lys-260 and Lys-272 are necessary for autophagic cell death induction. Deacetylated by SIRT2 in response to oxidative stress or serum deprivation, thereby negatively regulating FOXO1-mediated autophagic cell death. Once in the nucleus, acetylated by CREBBP/EP300. Acetylation diminishes the interaction with target DNA and attenuates the transcriptional activity. It increases the phosphorylation at Ser-254. Deacetylation by SIRT1 results in reactivation of the transcriptional activity. Oxidative stress by hydrogen peroxide treatment appears to promote deacetylation and uncoupling of insulin-induced phosphorylation. By contrast, resveratrol acts independently of acetylation. Acetylated at Lys-421, promoting its localization to the nucleus and transcription factor activity. Deacetylation at Lys-421 by SIRT6, promotes its translocation into the cytoplasm, preventing its transcription factor activity. Deacetylation and subsequent inhibition by SIRT6 has different effects depending on cell types: it inhibits gluconeogenesis in hepatocytes, promotes glucose sensing in pancreatic beta-cells and regulates lipid catabolism in brown adipocytes.

It is found in the cytoplasm. The protein localises to the nucleus. Its function is as follows. Transcription factor that is the main target of insulin signaling and regulates metabolic homeostasis in response to oxidative stress. Binds to the insulin response element (IRE) with consensus sequence 5'-TT[G/A]TTTTG-3' and the related Daf-16 family binding element (DBE) with consensus sequence 5'-TT[G/A]TTTAC-3'. Activity suppressed by insulin. Main regulator of redox balance and osteoblast numbers and controls bone mass. Orchestrates the endocrine function of the skeleton in regulating glucose metabolism. Also acts as a key regulator of chondrogenic commitment of skeletal progenitor cells in response to lipid availability: when lipids levels are low, translocates to the nucleus and promotes expression of SOX9, which induces chondrogenic commitment and suppresses fatty acid oxidation. Acts synergistically with ATF4 to suppress osteocalcin/BGLAP activity, increasing glucose levels and triggering glucose intolerance and insulin insensitivity. Also suppresses the transcriptional activity of RUNX2, an upstream activator of osteocalcin/BGLAP. Acts as an inhibitor of glucose sensing in pancreatic beta cells by acting as a transcription repressor and suppressing expression of PDX1. In hepatocytes, promotes gluconeogenesis by acting together with PPARGC1A and CEBPA to activate the expression of genes such as IGFBP1, G6PC1 and PCK1. Also promotes gluconeogenesis by directly promoting expression of PPARGC1A and G6PC1. Important regulator of cell death acting downstream of CDK1, PKB/AKT1 and STK4/MST1. Promotes neural cell death. Mediates insulin action on adipose tissue. Regulates the expression of adipogenic genes such as PPARG during preadipocyte differentiation and, adipocyte size and adipose tissue-specific gene expression in response to excessive calorie intake. Regulates the transcriptional activity of GADD45A and repair of nitric oxide-damaged DNA in beta-cells. Required for the autophagic cell death induction in response to starvation or oxidative stress in a transcription-independent manner. Mediates the function of MLIP in cardiomyocytes hypertrophy and cardiac remodeling. Positive regulator of apoptosis in cardiac smooth muscle cells as a result of its transcriptional activation of pro-apoptotic genes. Regulates endothelial cell (EC) viability and apoptosis in a PPIA/CYPA-dependent manner via transcription of CCL2 and BCL2L11 which are involved in EC chemotaxis and apoptosis. The protein is Forkhead box protein O1 (FOXO1) of Ictidomys tridecemlineatus (Thirteen-lined ground squirrel).